We begin with the raw amino-acid sequence, 697 residues long: MDVAYICEWDRRPRTSHCPSIPLVCAWSCRNLIAFTTDQRNEEEKDITNLIHILDTEHPWDVYSINSGHQEVITCLEWDQSGSRLLSADADGRIKCWGMTDHLANSWQNLVGSEVDGDPIVALSWLHNGVKLALHVEKSGVSSFGEKFSRVKFSPSLTLFGGKPMEGWIAVTVSGLVTVSLLKPNGQVLTATESLCRLRCRVALADIAFTGGGNIVVATCDGSSTSPVQFYKVCVSVVSEKCKIDTEILPSLFMRCTTDPARKDKFPAVTHLKFLARDMSEQVLLCASNQCSSIAECWSLRKEGLPLNNIFQQLSPAVSDKQPMILKWRILSATNELERVSAVALPKLPISLTNTDIKVASETKFYPGLGLALAFHDGNVQIVHRLSLQPMAVLYGSSLRPSEEPSLKRQRSPTPCIHFKALQMSWTSLALVGLDTQGKLSILRVSPSMGHSLDMSTSLRHLLFLLEYCMVTGYDWWDILLHVQPGMVHNLVEKLNEEYTRQNAALQQVLSTRILAMKASLCKLSQTTVTRVCDYHAKLFLISISCTLKSLLRPHVLNTPDKSPGDRLTEICNKFTDTDIDKVMINLKTEEFVLDMPTLQSLQQLIQWLGDFVLYLLVSLPNQGSSVRPGHSFLRDGASLGTLREMMVMIRIWGLLKPSCLPVYTATSDTQDSMSLLFRLLTRLWLCCPPHNQRLIT.

WD repeat units lie at residues 68–107 (GHQEVITCLEWDQSGSRLLSADADGRIKCWGMTDHLANSW), 199–241 (RCRV…VSEK), 264–308 (DKFP…LPLN), and 622–663 (NQGS…CLPV).

It belongs to the Mediator complex subunit 16 family. Component of the Mediator complex.

Its subcellular location is the nucleus. Its function is as follows. Component of the Mediator complex, a coactivator involved in the regulated transcription of nearly all RNA polymerase II-dependent genes. Mediator functions as a bridge to convey information from gene-specific regulatory proteins to the basal RNA polymerase II transcription machinery. Mediator is recruited to promoters by direct interactions with regulatory proteins and serves as a scaffold for the assembly of a functional preinitiation complex with RNA polymerase II and the general transcription factors. This chain is Mediator of RNA polymerase II transcription subunit 16 (med16), found in Xenopus laevis (African clawed frog).